A 145-amino-acid polypeptide reads, in one-letter code: Deoxyuridine 5'-triphosphate nucleotidohydrolase (145 aa).

Residues 62–64 (RSG), Asn-75, 79–81 (TVD), and Lys-89 contribute to the substrate site.

This sequence belongs to the dUTPase family. It depends on Mg(2+) as a cofactor.

The enzyme catalyses dUTP + H2O = dUMP + diphosphate + H(+). It participates in pyrimidine metabolism; dUMP biosynthesis; dUMP from dCTP (dUTP route): step 2/2. In terms of biological role, this enzyme is involved in nucleotide metabolism: it produces dUMP, the immediate precursor of thymidine nucleotides and it decreases the intracellular concentration of dUTP so that uracil cannot be incorporated into DNA. This Helicobacter pylori (strain Shi470) protein is Deoxyuridine 5'-triphosphate nucleotidohydrolase.